A 149-amino-acid chain; its full sequence is MGLEKSFILFSLLVLVLGWVQPSLGKESSAQKFNRQHMDTEGSSNSSPTYCNQMMTPRGMTKGSCKPVNTFVHETLADVQAICSQGQVTCKNGKSNCYKSSCALHITDCRLKGNSKYPNCDYKTSDYQKHIIIACEGNPSVPVHFDASE.

A signal peptide spans 1–25 (MGLEKSFILFSLLVLVLGWVQPSLG). K32 and R35 together coordinate substrate. The Proton acceptor role is filled by H37. 4 disulfides stabilise this stretch: C51/C109, C65/C120, C83/C135, and C90/C97. Substrate contacts are provided by residues 66–70 (KPVNT), K91, and R110. Catalysis depends on H144, which acts as the Proton donor.

This sequence belongs to the pancreatic ribonuclease family. In terms of assembly, monomer. Interacts with and forms tight 1:1 complexes with RNH1. Dimerization of two such complexes may occur. Interaction with RNH1 inhibits this protein. As to expression, pancreas.

The protein resides in the secreted. It catalyses the reaction an [RNA] containing cytidine + H2O = an [RNA]-3'-cytidine-3'-phosphate + a 5'-hydroxy-ribonucleotide-3'-[RNA].. It carries out the reaction an [RNA] containing uridine + H2O = an [RNA]-3'-uridine-3'-phosphate + a 5'-hydroxy-ribonucleotide-3'-[RNA].. Endonuclease that catalyzes the cleavage of RNA on the 3' side of pyrimidine nucleotides. Acts on single-stranded and double-stranded RNA. The protein is Ribonuclease pancreatic (RNASE1) of Leopoldamys edwardsi (Edwards's long-tailed giant rat).